Consider the following 417-residue polypeptide: Glutamyl-tRNA reductase (417 aa).

Residues threonine 49–arginine 52, serine 109, glutamate 114–glutamine 116, and glutamine 120 each bind substrate. Catalysis depends on cysteine 50, which acts as the Nucleophile. Glycine 189–glycine 194 lines the NADP(+) pocket.

Belongs to the glutamyl-tRNA reductase family. As to quaternary structure, homodimer.

The enzyme catalyses (S)-4-amino-5-oxopentanoate + tRNA(Glu) + NADP(+) = L-glutamyl-tRNA(Glu) + NADPH + H(+). Its pathway is porphyrin-containing compound metabolism; protoporphyrin-IX biosynthesis; 5-aminolevulinate from L-glutamyl-tRNA(Glu): step 1/2. Its function is as follows. Catalyzes the NADPH-dependent reduction of glutamyl-tRNA(Glu) to glutamate 1-semialdehyde (GSA). In Streptococcus sanguinis (strain SK36), this protein is Glutamyl-tRNA reductase.